The sequence spans 828 residues: Translation initiation factor IF-2 (828 aa).

Disordered stretches follow at residues 48–76 (SYSG…SEEF) and 112–148 (ASQE…ESTL). The span at 49-58 (YSGSTTTLSL) shows a compositional bias: polar residues. Positions 65-74 (LETGSSSGSE) are enriched in low complexity. The segment covering 116–126 (DPIEVEQEESS) has biased composition (acidic residues). Positions 127-144 (DTNKVKEEPKIEEVKDIE) are enriched in basic and acidic residues. Residues 326 to 496 (SRAPVVTVMG…LLIAEMQNLK (171 aa)) form the tr-type G domain. The segment at 335-342 (GHVDHGKT) is G1. 335 to 342 (GHVDHGKT) provides a ligand contact to GTP. Positions 360–364 (GITQH) are G2. Positions 382-385 (DTPG) are G3. Residues 382–386 (DTPGH) and 436–439 (NKID) contribute to the GTP site. The interval 436 to 439 (NKID) is G4. Positions 472 to 474 (SAL) are G5.

Belongs to the TRAFAC class translation factor GTPase superfamily. Classic translation factor GTPase family. IF-2 subfamily.

The protein localises to the cytoplasm. Functionally, one of the essential components for the initiation of protein synthesis. Protects formylmethionyl-tRNA from spontaneous hydrolysis and promotes its binding to the 30S ribosomal subunits. Also involved in the hydrolysis of GTP during the formation of the 70S ribosomal complex. In Rickettsia bellii (strain OSU 85-389), this protein is Translation initiation factor IF-2.